We begin with the raw amino-acid sequence, 395 residues long: Putative gustatory receptor 93b (395 aa).

The Cytoplasmic segment spans residues 1–18 (MSGLLVMPRILRCLNVSR). Residues 19-39 (ISAILLRSCFLYGTFFGVITF) traverse the membrane as a helical segment. The Extracellular segment spans residues 40-89 (RIERKDSQLVAINRRGYLWICLVIRLLASCFYGYSYDAWSGQYEDMYLRA). Residues 90 to 110 (FFGFRLIGCLICSVIILVMQF) traverse the membrane as a helical segment. The Cytoplasmic portion of the chain corresponds to 111-153 (WFGEELINLVNRFLQLFRRMQSLTNSPKNRFGDRAEFLLMFSK). The chain crosses the membrane as a helical span at residues 154–174 (VFSLLFVFMAFRLMLSPWFLL). Residues 175–183 (TLVCDLYTS) lie on the Extracellular side of the membrane. A helical transmembrane segment spans residues 184–204 (VGTGMITHLCFVGYLSIGVLY). Residues 205–267 (RDLNNYVDCQ…RSFQQLFDLP (63 aa)) are Cytoplasmic-facing. Residues 268–288 (LFLSLAQSLLAMSMVSYHAIL) traverse the membrane as a helical segment. The Extracellular segment spans residues 289 to 293 (RRQYS). A helical transmembrane segment spans residues 294–314 (FNLWGLVIKLLIDVVLLTMSV). The Cytoplasmic portion of the chain corresponds to 315 to 369 (HSAVNGSRLIRRLSFENFYVTDSQSYHQKLELFLGRLQHQELRVFPLGLFEVSNE). Residues 370–390 (LTLFFLSAMVTYLVFLVQYGM) traverse the membrane as a helical segment. Topologically, residues 391–395 (QSQQI) are extracellular.

The protein belongs to the insect chemoreceptor superfamily. Gustatory receptor (GR) family. Gr93a subfamily. In terms of tissue distribution, in larvae, is expressed in neurons of the terminal external chemosensory organ and of the dorsal pharyngeal sense organ.

It localises to the cell membrane. Its function is as follows. Probable gustatory receptor which mediates acceptance or avoidance behavior, depending on its substrates. The protein is Putative gustatory receptor 93b (Gr93b) of Drosophila melanogaster (Fruit fly).